A 510-amino-acid polypeptide reads, in one-letter code: NAD(P)H-quinone oxidoreductase subunit 2 A, chloroplastic (510 aa).

13 helical membrane-spanning segments follow: residues 24–44, 57–77, 99–119, 124–144, 149–169, 183–203, 229–249, 295–315, 323–343, 354–374, 395–415, 418–438, and 484–504; these read LLLF…GLIL, TPWL…ALLF, IFQF…VEYI, MAIT…MFLC, LITI…LSGY, YLLM…WLYG, ISIA…PAPF, WHLL…LIAI, MLAY…IVGD, YMLF…LFGL, ALSS…AGFF, LYLF…IGLL, and MIVC…IIAI.

It belongs to the complex I subunit 2 family. As to quaternary structure, NDH is composed of at least 16 different subunits, 5 of which are encoded in the nucleus.

It localises to the plastid. Its subcellular location is the chloroplast thylakoid membrane. It carries out the reaction a plastoquinone + NADH + (n+1) H(+)(in) = a plastoquinol + NAD(+) + n H(+)(out). It catalyses the reaction a plastoquinone + NADPH + (n+1) H(+)(in) = a plastoquinol + NADP(+) + n H(+)(out). NDH shuttles electrons from NAD(P)H:plastoquinone, via FMN and iron-sulfur (Fe-S) centers, to quinones in the photosynthetic chain and possibly in a chloroplast respiratory chain. The immediate electron acceptor for the enzyme in this species is believed to be plastoquinone. Couples the redox reaction to proton translocation, and thus conserves the redox energy in a proton gradient. The sequence is that of NAD(P)H-quinone oxidoreductase subunit 2 A, chloroplastic from Nuphar advena (Common spatterdock).